The chain runs to 200 residues: dITP/XTP pyrophosphatase (200 aa).

Residue 7–12 (TSNKHK) coordinates substrate. Mg(2+) contacts are provided by E38 and D73. D73 serves as the catalytic Proton acceptor. Residues S74, 154–157 (FGYD), K177, and 182–183 (HR) contribute to the substrate site.

Belongs to the HAM1 NTPase family. In terms of assembly, homodimer. Mg(2+) serves as cofactor.

It carries out the reaction XTP + H2O = XMP + diphosphate + H(+). The catalysed reaction is dITP + H2O = dIMP + diphosphate + H(+). The enzyme catalyses ITP + H2O = IMP + diphosphate + H(+). In terms of biological role, pyrophosphatase that catalyzes the hydrolysis of nucleoside triphosphates to their monophosphate derivatives, with a high preference for the non-canonical purine nucleotides XTP (xanthosine triphosphate), dITP (deoxyinosine triphosphate) and ITP. Seems to function as a house-cleaning enzyme that removes non-canonical purine nucleotides from the nucleotide pool, thus preventing their incorporation into DNA/RNA and avoiding chromosomal lesions. This Campylobacter jejuni subsp. jejuni serotype O:6 (strain 81116 / NCTC 11828) protein is dITP/XTP pyrophosphatase.